A 360-amino-acid chain; its full sequence is Photosystem II protein D1 1 (360 aa).

The next 3 membrane-spanning stretches (helical) occupy residues 29–46 (YVGWFGVLMIPTLLTATT), 118–133 (HFLIGVFCYMGREWEL), and 142–156 (WICVAFSAPVAAATA). Histidine 118 is a binding site for chlorophyll a. Tyrosine 126 contributes to the pheophytin a binding site. Residues aspartate 170 and glutamate 189 each contribute to the [CaMn4O5] cluster site. Residues 197–218 (FHMLGVAGVFGGSLFSAMHGSL) traverse the membrane as a helical segment. A chlorophyll a-binding site is contributed by histidine 198. A quinone is bound by residues histidine 215 and 264 to 265 (SF). Histidine 215 contacts Fe cation. Histidine 272 is a Fe cation binding site. A helical membrane pass occupies residues 274 to 288 (FLGAWPVVGIWFTAL). Residues histidine 332, glutamate 333, aspartate 342, and alanine 344 each coordinate [CaMn4O5] cluster. The propeptide occupies 345 to 360 (AGEQAPVALQAPAING).

This sequence belongs to the reaction center PufL/M/PsbA/D family. As to quaternary structure, PSII is composed of 1 copy each of membrane proteins PsbA, PsbB, PsbC, PsbD, PsbE, PsbF, PsbH, PsbI, PsbJ, PsbK, PsbL, PsbM, PsbT, PsbX, PsbY, PsbZ, Psb30/Ycf12, peripheral proteins PsbO, CyanoQ (PsbQ), PsbU, PsbV and a large number of cofactors. It forms dimeric complexes. Requires The D1/D2 heterodimer binds P680, chlorophylls that are the primary electron donor of PSII, and subsequent electron acceptors. It shares a non-heme iron and each subunit binds pheophytin, quinone, additional chlorophylls, carotenoids and lipids. D1 provides most of the ligands for the Mn4-Ca-O5 cluster of the oxygen-evolving complex (OEC). There is also a Cl(-1) ion associated with D1 and D2, which is required for oxygen evolution. The PSII complex binds additional chlorophylls, carotenoids and specific lipids. as cofactor. In terms of processing, tyr-161 forms a radical intermediate that is referred to as redox-active TyrZ, YZ or Y-Z. Post-translationally, C-terminally processed by CtpA; processing is essential to allow assembly of the oxygen-evolving complex and thus photosynthetic growth.

Its subcellular location is the cellular thylakoid membrane. It carries out the reaction 2 a plastoquinone + 4 hnu + 2 H2O = 2 a plastoquinol + O2. Photosystem II (PSII) is a light-driven water:plastoquinone oxidoreductase that uses light energy to abstract electrons from H(2)O, generating O(2) and a proton gradient subsequently used for ATP formation. It consists of a core antenna complex that captures photons, and an electron transfer chain that converts photonic excitation into a charge separation. The D1/D2 (PsbA/PsbD) reaction center heterodimer binds P680, the primary electron donor of PSII as well as several subsequent electron acceptors. The sequence is that of Photosystem II protein D1 1 from Picosynechococcus sp. (strain ATCC 27264 / PCC 7002 / PR-6) (Agmenellum quadruplicatum).